A 973-amino-acid polypeptide reads, in one-letter code: UvrABC system protein A (973 aa).

An ATP-binding site is contributed by 34-41 (GLSGSGKS). ABC transporter domains are found at residues 330-609 (WAKS…PNSI) and 629-958 (AKKN…QFLK). Position 662-669 (662-669 (GVSGGGKS)) interacts with ATP. Residues 761–787 (CEACQGDGVIKIEMHFLPDVYVTCDVC) form a C4-type zinc finger.

The protein belongs to the ABC transporter superfamily. UvrA family. Forms a heterotetramer with UvrB during the search for lesions.

It localises to the cytoplasm. The UvrABC repair system catalyzes the recognition and processing of DNA lesions. UvrA is an ATPase and a DNA-binding protein. A damage recognition complex composed of 2 UvrA and 2 UvrB subunits scans DNA for abnormalities. When the presence of a lesion has been verified by UvrB, the UvrA molecules dissociate. This Mesorhizobium japonicum (strain LMG 29417 / CECT 9101 / MAFF 303099) (Mesorhizobium loti (strain MAFF 303099)) protein is UvrABC system protein A.